Here is a 370-residue protein sequence, read N- to C-terminus: UDP-N-acetylglucosamine--N-acetylmuramyl-(pentapeptide) pyrophosphoryl-undecaprenol N-acetylglucosamine transferase (370 aa).

Residues 15–17 (TGG), asparagine 129, arginine 170, serine 200, isoleucine 253, and glutamine 298 each bind UDP-N-acetyl-alpha-D-glucosamine.

It belongs to the glycosyltransferase 28 family. MurG subfamily.

It localises to the cell inner membrane. It catalyses the reaction di-trans,octa-cis-undecaprenyl diphospho-N-acetyl-alpha-D-muramoyl-L-alanyl-D-glutamyl-meso-2,6-diaminopimeloyl-D-alanyl-D-alanine + UDP-N-acetyl-alpha-D-glucosamine = di-trans,octa-cis-undecaprenyl diphospho-[N-acetyl-alpha-D-glucosaminyl-(1-&gt;4)]-N-acetyl-alpha-D-muramoyl-L-alanyl-D-glutamyl-meso-2,6-diaminopimeloyl-D-alanyl-D-alanine + UDP + H(+). The protein operates within cell wall biogenesis; peptidoglycan biosynthesis. Functionally, cell wall formation. Catalyzes the transfer of a GlcNAc subunit on undecaprenyl-pyrophosphoryl-MurNAc-pentapeptide (lipid intermediate I) to form undecaprenyl-pyrophosphoryl-MurNAc-(pentapeptide)GlcNAc (lipid intermediate II). The polypeptide is UDP-N-acetylglucosamine--N-acetylmuramyl-(pentapeptide) pyrophosphoryl-undecaprenol N-acetylglucosamine transferase (Salinibacter ruber (strain DSM 13855 / M31)).